The following is a 474-amino-acid chain: Equilibrative nucleoside transporter 3 (474 aa).

At 1–53 (MAIISEDDFRHTSNSTYRTASSSLRADQEALLEKLLDRPPPSLQRPEDRFNGT) the chain is on the cytoplasmic side. A phosphoserine mark is found at Ser-21 and Ser-23. Positions 31-32 (LL) match the Dileucine internalization motif motif. Residues 54–74 (YIIFFSLGIGGLLPWNFFVTA) form a helical membrane-spanning segment. Residues 75-105 (QEYWIFKLSNCSSPAAGEEPKDSDILNYFES) are Extracellular-facing. A glycan (N-linked (GlcNAc...) asparagine) is linked at Asn-84. Residues 106–126 (YLAVASTVPSVLCLALNFLLV) traverse the membrane as a helical segment. At 127–134 (NRVPIRVR) the chain is on the cytoplasmic side. A helical transmembrane segment spans residues 135–155 (VLASLTVMLAIFIVMTVLVKV). At 156 to 161 (DTSSWT) the chain is on the extracellular side. A helical membrane pass occupies residues 162-182 (HSFFTITITCMAILSGTSTIF). Topologically, residues 183–201 (NSSVFGMTGSFPMRNSQAL) are cytoplasmic. Residues 202 to 222 (ISGGAMGGTLSAVASLVDLAV) form a helical membrane-spanning segment. Topologically, residues 223–230 (ASDVTDST) are extracellular. The helical transmembrane segment at 231–251 (LAFFLTADIFLALCIGLYLLL) threads the bilayer. Topologically, residues 252 to 305 (PRLDYARYYMKPVWPTVFSGEEQLPQDSPSPTSVAPGSSDPQTPPLGPILKKTT) are cytoplasmic. The disordered stretch occupies residues 272–294 (EEQLPQDSPSPTSVAPGSSDPQT). Residues 276–292 (PQDSPSPTSVAPGSSDP) show a composition bias toward polar residues. A helical membrane pass occupies residues 306-326 (GLGFCIIYLFFITSLIFPAIC). The Extracellular segment spans residues 327-339 (TNIESLSKGSGSP). The helical transmembrane segment at 340–357 (WSTKFFVPLTTFLLYNFA) threads the bilayer. Over 358 to 376 (DLCGRQVTAWIQVPGPRSK) the chain is Cytoplasmic. A helical transmembrane segment spans residues 377-397 (ALPGLALLRTCFVPLFVFCNY). Residues 398–414 (QPRGHLHTVLFQSDVYP) are Extracellular-facing. Residues 415 to 435 (VLFTSLLGLSNGYLSTLALIY) form a helical membrane-spanning segment. At 436–453 (GPKIVPRELAEATGVVMT) the chain is on the cytoplasmic side. Residues 454-474 (FYMGLGLVLGSACSALLVHLI) traverse the membrane as a helical segment.

The protein belongs to the SLC29A/ENT transporter (TC 2.A.57) family.

It localises to the lysosome membrane. The protein localises to the late endosome membrane. The protein resides in the mitochondrion membrane. It is found in the cell membrane. It carries out the reaction adenosine(in) = adenosine(out). The enzyme catalyses guanosine(in) = guanosine(out). The catalysed reaction is inosine(in) = inosine(out). It catalyses the reaction uridine(out) = uridine(in). It carries out the reaction cytidine(in) = cytidine(out). The enzyme catalyses thymidine(in) = thymidine(out). The catalysed reaction is 2'-deoxyadenosine(in) = 2'-deoxyadenosine(out). It catalyses the reaction 2'-deoxycytidine(in) = 2'-deoxycytidine(out). It carries out the reaction guanine(out) = guanine(in). The enzyme catalyses uracil(in) = uracil(out). The catalysed reaction is (R)-noradrenaline(out) = (R)-noradrenaline(in). It catalyses the reaction dopamine(out) = dopamine(in). It carries out the reaction serotonin(out) = serotonin(in). The enzyme catalyses tyramine(in) = tyramine(out). The catalysed reaction is ATP(in) = ATP(out). Its function is as follows. Uniporter that mediates the facilitative transport of nucleoside across lysosomal and mitochondrial membranes. Functions as a non-electrogenic Na(+)-independent transporter. Substrate transport is pH-dependent and enhanced under acidic condition, probably reflecting the location of the transporter in acidic intracellular compartments. Proton is not a cotransporting ion but most likely change the ionization state of the transporter which dictates transport-permissible/impermissible conformation for nucleoside translocation. May direct the nucleoside transport from lysosomes to cytosol or cytosol to mitochondria to facilitate the fundamental function of salvage synthesis of nucleic acids. Involved in the transport of nucleosides (adenosine, guanosine, uridine, thymidine, cytidine and inosine) and deoxynucleosides (deoxyadenosine, deoxycytidine). Also mediates transport of purine nucleobases (adenine, guanine) and pyrimidine nucleobases (uracil). Also able to transport monoamine neurotransmitters dopamine, serotonin, noradrenaline and tyramine. Capable of transporting ATP. Mediates nucleoside export from lysosomes in macrophages, which regulates macrophage functions and numbers. The chain is Equilibrative nucleoside transporter 3 (SLC29A3) from Bos taurus (Bovine).